We begin with the raw amino-acid sequence, 74 residues long: Sec-independent protein translocase protein TatA (74 aa).

A helical transmembrane segment spans residues 1 to 21 (MGSFSIWHWLIVLLIVVLVFG).

Belongs to the TatA/E family. In terms of assembly, the Tat system comprises two distinct complexes: a TatABC complex, containing multiple copies of TatA, TatB and TatC subunits, and a separate TatA complex, containing only TatA subunits. Substrates initially bind to the TatABC complex, which probably triggers association of the separate TatA complex to form the active translocon.

Its subcellular location is the cell inner membrane. Its function is as follows. Part of the twin-arginine translocation (Tat) system that transports large folded proteins containing a characteristic twin-arginine motif in their signal peptide across membranes. TatA could form the protein-conducting channel of the Tat system. This Nitrosospira multiformis (strain ATCC 25196 / NCIMB 11849 / C 71) protein is Sec-independent protein translocase protein TatA.